Reading from the N-terminus, the 249-residue chain is 2,3-bisphosphoglycerate-dependent phosphoglycerate mutase (249 aa).

Substrate is bound by residues 9–16, 22–23, Arg-61, 88–91, Lys-99, 115–116, and 184–185; these read RHGQSQWN, TG, ERHY, RR, and GN. The active-site Tele-phosphohistidine intermediate is the His-10. Glu-88 acts as the Proton donor/acceptor in catalysis.

It belongs to the phosphoglycerate mutase family. BPG-dependent PGAM subfamily. As to quaternary structure, homodimer.

The catalysed reaction is (2R)-2-phosphoglycerate = (2R)-3-phosphoglycerate. It participates in carbohydrate degradation; glycolysis; pyruvate from D-glyceraldehyde 3-phosphate: step 3/5. Its function is as follows. Catalyzes the interconversion of 2-phosphoglycerate and 3-phosphoglycerate. This is 2,3-bisphosphoglycerate-dependent phosphoglycerate mutase from Xanthomonas campestris pv. campestris (strain 8004).